The chain runs to 332 residues: Glycerol-3-phosphate dehydrogenase [NAD(P)+] (332 aa).

NADPH contacts are provided by Ser15, Trp16, and Lys110. Residues Lys110, Gly137, and Ser139 each coordinate sn-glycerol 3-phosphate. Position 141 (Ala141) interacts with NADPH. Lys192, Asp245, Ser255, Arg256, and Asn257 together coordinate sn-glycerol 3-phosphate. Lys192 serves as the catalytic Proton acceptor. Arg256 contacts NADPH. Glu282 contacts NADPH.

Belongs to the NAD-dependent glycerol-3-phosphate dehydrogenase family.

The protein localises to the cytoplasm. It carries out the reaction sn-glycerol 3-phosphate + NAD(+) = dihydroxyacetone phosphate + NADH + H(+). The catalysed reaction is sn-glycerol 3-phosphate + NADP(+) = dihydroxyacetone phosphate + NADPH + H(+). It functions in the pathway membrane lipid metabolism; glycerophospholipid metabolism. Functionally, catalyzes the reduction of the glycolytic intermediate dihydroxyacetone phosphate (DHAP) to sn-glycerol 3-phosphate (G3P), the key precursor for phospholipid synthesis. The protein is Glycerol-3-phosphate dehydrogenase [NAD(P)+] of Coxiella burnetii (strain CbuK_Q154) (Coxiella burnetii (strain Q154)).